The chain runs to 71 residues: Gas vesicle protein A (71 aa).

The protein belongs to the gas vesicle GvpA family. In terms of assembly, the gas vesicle shell is 2 nm thick and consists of a single layer of this protein. It forms helical ribs nearly perpendicular to the long axis of the vesicle.

The protein resides in the gas vesicle shell. Its function is as follows. Gas vesicles are hollow, gas filled proteinaceous nanostructures found in some microorganisms. During planktonic growth they allow positioning of the organism at a favorable depth for light or nutrient acquisition. GvpA forms the protein shell. Functionally, cluster expression in E.coli (gvpA1-gvpA2-gvpC-gvpN-gvpJ-gvpK-gvpF-gvpG-gvpV-gvpW) allows cells to float and produces irregularly shaped gas vesicles. The protein is Gas vesicle protein A of Nostoc sp. (strain PCC 7120 / SAG 25.82 / UTEX 2576).